The sequence spans 403 residues: Dual-specificity RNA methyltransferase RlmN (403 aa).

The Proton acceptor role is filled by glutamate 126. One can recognise a Radical SAM core domain in the interval 132–375 (ETDRGTLCVS…VRTPRGRDIL (244 aa)). The cysteines at positions 139 and 378 are disulfide-linked. Positions 146, 150, and 153 each coordinate [4Fe-4S] cluster. S-adenosyl-L-methionine is bound by residues 204–205 (GE), serine 236, 258–260 (SLH), and asparagine 335. Residue cysteine 378 is the S-methylcysteine intermediate of the active site.

The protein belongs to the radical SAM superfamily. RlmN family. Requires [4Fe-4S] cluster as cofactor.

Its subcellular location is the cytoplasm. It carries out the reaction adenosine(2503) in 23S rRNA + 2 reduced [2Fe-2S]-[ferredoxin] + 2 S-adenosyl-L-methionine = 2-methyladenosine(2503) in 23S rRNA + 5'-deoxyadenosine + L-methionine + 2 oxidized [2Fe-2S]-[ferredoxin] + S-adenosyl-L-homocysteine. The catalysed reaction is adenosine(37) in tRNA + 2 reduced [2Fe-2S]-[ferredoxin] + 2 S-adenosyl-L-methionine = 2-methyladenosine(37) in tRNA + 5'-deoxyadenosine + L-methionine + 2 oxidized [2Fe-2S]-[ferredoxin] + S-adenosyl-L-homocysteine. Functionally, specifically methylates position 2 of adenine 2503 in 23S rRNA and position 2 of adenine 37 in tRNAs. m2A2503 modification seems to play a crucial role in the proofreading step occurring at the peptidyl transferase center and thus would serve to optimize ribosomal fidelity. The sequence is that of Dual-specificity RNA methyltransferase RlmN from Bradyrhizobium sp. (strain ORS 278).